Here is a 370-residue protein sequence, read N- to C-terminus: Queuine tRNA-ribosyltransferase (370 aa).

Asp-89 acts as the Proton acceptor in catalysis. Residues 89-93 (DSGGF), Asp-143, Gln-187, and Gly-214 each bind substrate. Positions 245 to 251 (GVGKPEN) are RNA binding. Catalysis depends on Asp-264, which acts as the Nucleophile. The interval 269–273 (TRNAR) is RNA binding; important for wobble base 34 recognition. Residues Cys-302, Cys-304, Cys-307, and His-333 each coordinate Zn(2+).

Belongs to the queuine tRNA-ribosyltransferase family. In terms of assembly, homodimer. Within each dimer, one monomer is responsible for RNA recognition and catalysis, while the other monomer binds to the replacement base PreQ1. Zn(2+) is required as a cofactor.

It catalyses the reaction 7-aminomethyl-7-carbaguanine + guanosine(34) in tRNA = 7-aminomethyl-7-carbaguanosine(34) in tRNA + guanine. It participates in tRNA modification; tRNA-queuosine biosynthesis. Its function is as follows. Catalyzes the base-exchange of a guanine (G) residue with the queuine precursor 7-aminomethyl-7-deazaguanine (PreQ1) at position 34 (anticodon wobble position) in tRNAs with GU(N) anticodons (tRNA-Asp, -Asn, -His and -Tyr). Catalysis occurs through a double-displacement mechanism. The nucleophile active site attacks the C1' of nucleotide 34 to detach the guanine base from the RNA, forming a covalent enzyme-RNA intermediate. The proton acceptor active site deprotonates the incoming PreQ1, allowing a nucleophilic attack on the C1' of the ribose to form the product. After dissociation, two additional enzymatic reactions on the tRNA convert PreQ1 to queuine (Q), resulting in the hypermodified nucleoside queuosine (7-(((4,5-cis-dihydroxy-2-cyclopenten-1-yl)amino)methyl)-7-deazaguanosine). This Hamiltonella defensa subsp. Acyrthosiphon pisum (strain 5AT) protein is Queuine tRNA-ribosyltransferase.